A 1197-amino-acid polypeptide reads, in one-letter code: ATP-dependent helicase/nuclease subunit A (1197 aa).

Positions 2–458 (KNWTTEQQAA…IDLAKNFRSR (457 aa)) constitute a UvrD-like helicase ATP-binding domain. 23-30 (AAAGSGKT) is an ATP binding site. A UvrD-like helicase C-terminal domain is found at 485–774 (RAALYQGASF…RIMSIHKSKG (290 aa)).

Belongs to the helicase family. AddA subfamily. In terms of assembly, heterodimer of AddA and AddB/RexB. Mg(2+) serves as cofactor.

The enzyme catalyses Couples ATP hydrolysis with the unwinding of duplex DNA by translocating in the 3'-5' direction.. The catalysed reaction is ATP + H2O = ADP + phosphate + H(+). In terms of biological role, the heterodimer acts as both an ATP-dependent DNA helicase and an ATP-dependent, dual-direction single-stranded exonuclease. Recognizes the chi site generating a DNA molecule suitable for the initiation of homologous recombination. The AddA nuclease domain is required for chi fragment generation; this subunit has the helicase and 3' -&gt; 5' nuclease activities. In Alkaliphilus metalliredigens (strain QYMF), this protein is ATP-dependent helicase/nuclease subunit A.